A 156-amino-acid chain; its full sequence is Phosphopantetheine adenylyltransferase (156 aa).

Thr-9 contacts substrate. ATP contacts are provided by residues 9-10 and His-17; that span reads TF. 3 residues coordinate substrate: Lys-41, Leu-73, and Arg-87. ATP-binding positions include 88–90, Glu-98, and 123–129; these read GVR and WAFVSST.

Belongs to the bacterial CoaD family. As to quaternary structure, homohexamer. Mg(2+) serves as cofactor.

It localises to the cytoplasm. It carries out the reaction (R)-4'-phosphopantetheine + ATP + H(+) = 3'-dephospho-CoA + diphosphate. It participates in cofactor biosynthesis; coenzyme A biosynthesis; CoA from (R)-pantothenate: step 4/5. Its function is as follows. Reversibly transfers an adenylyl group from ATP to 4'-phosphopantetheine, yielding dephospho-CoA (dPCoA) and pyrophosphate. The sequence is that of Phosphopantetheine adenylyltransferase from Haemophilus influenzae (strain ATCC 51907 / DSM 11121 / KW20 / Rd).